We begin with the raw amino-acid sequence, 194 residues long: RNA polymerase II subunit A C-terminal domain phosphatase SSU72 like protein 6 (194 aa).

The protein belongs to the SSU72 phosphatase family.

The protein resides in the nucleus. It catalyses the reaction O-phospho-L-seryl-[protein] + H2O = L-seryl-[protein] + phosphate. The catalysed reaction is O-phospho-L-threonyl-[protein] + H2O = L-threonyl-[protein] + phosphate. Protein phosphatase that catalyzes the dephosphorylation of the C-terminal domain of RNA polymerase II. Plays a role in RNA processing and termination. This is RNA polymerase II subunit A C-terminal domain phosphatase SSU72 like protein 6 from Homo sapiens (Human).